Consider the following 195-residue polypeptide: MLNAPTQALLGRPLVGNGANGAPGTGANGGDGGILFGSGGAGGSGAAGMAGGNGGAAGLFGNGGAGGAGGSATAGAAGAGGNGGAGGLLFGTAGAGGNGGLSLGLGVAGGAGGAGGSGGSDTAGHGGTGGAGGLLFGAGEDGTTPGGNGGAGGVAGLFGDGGNGGNAGVGTPAGNVGAGGTGGLLLGQDGMTGLT.

Belongs to the mycobacterial PE family. PGRS subfamily. In terms of assembly, interacts with human TLR2.

It localises to the secreted. Its subcellular location is the cell wall. It is found in the cell surface. Its activity is regulated as follows. Binding of Ca(2+) to PE_PGRS61 induces conformational changes and increases affinity for TLR2. In terms of biological role, mediates Ca(2+)-dependent up-regulation of the anti-inflammatory cytokine IL-10. In Mycobacterium tuberculosis (strain ATCC 25618 / H37Rv), this protein is PE-PGRS family protein PE_PGRS61.